A 318-amino-acid chain; its full sequence is Ribose-phosphate pyrophosphokinase 2 (318 aa).

96 to 101 (RQDKKD) contributes to the ATP binding site. Mg(2+) contacts are provided by aspartate 128, histidine 130, aspartate 139, and aspartate 143. Histidine 130 provides a ligand contact to ATP. Positions 212 to 227 (KDRVAILVDDMADTCG) are binding of phosphoribosylpyrophosphate.

The protein belongs to the ribose-phosphate pyrophosphokinase family. As to quaternary structure, homodimer. The active form is probably a hexamer composed of 3 homodimers. The cofactor is Mg(2+).

The enzyme catalyses D-ribose 5-phosphate + ATP = 5-phospho-alpha-D-ribose 1-diphosphate + AMP + H(+). The protein operates within metabolic intermediate biosynthesis; 5-phospho-alpha-D-ribose 1-diphosphate biosynthesis; 5-phospho-alpha-D-ribose 1-diphosphate from D-ribose 5-phosphate (route I): step 1/1. Its activity is regulated as follows. Activated by magnesium and inorganic phosphate. Functionally, catalyzes the synthesis of phosphoribosylpyrophosphate (PRPP) that is essential for nucleotide synthesis. This is Ribose-phosphate pyrophosphokinase 2 (Prps2) from Rattus norvegicus (Rat).